The chain runs to 394 residues: Aspergillopepsin-1 (394 aa).

The N-terminal stretch at 1-20 (MVVFSKTAALVLGLSTAVSA) is a signal peptide. Residues 21–69 (APAPTRKGFTINQIARPANKTRTVNLPGLYARSLAKFGGTVPQSVKEAA) constitute a propeptide, activation peptide. The Peptidase A1 domain occupies 85–391 (YLTPVTVGKS…NSEGPKLGFA (307 aa)). Catalysis depends on residues aspartate 101 and aspartate 283. Residues cysteine 319 and cysteine 354 are joined by a disulfide bond.

It belongs to the peptidase A1 family.

The protein resides in the secreted. It catalyses the reaction Hydrolysis of proteins with broad specificity. Generally favors hydrophobic residues in P1 and P1', but also accepts Lys in P1, which leads to activation of trypsinogen. Does not clot milk.. In terms of biological role, secreted aspartic endopeptidase that allows assimilation of proteinaceous substrates. The scissile peptide bond is attacked by a nucleophilic water molecule activated by two aspartic residues in the active site. Shows a broad primary substrate specificity. Favors hydrophobic residues at the P1 and P1' positions, but also accepts a lysine residue in the P1 position, leading to the activation of trypsinogen and chymotrypsinogen A. This Aspergillus niger protein is Aspergillopepsin-1.